Reading from the N-terminus, the 105-residue chain is Nucleoid-associated protein PTH_0052 (105 aa).

It belongs to the YbaB/EbfC family. As to quaternary structure, homodimer.

The protein resides in the cytoplasm. Its subcellular location is the nucleoid. Functionally, binds to DNA and alters its conformation. May be involved in regulation of gene expression, nucleoid organization and DNA protection. The chain is Nucleoid-associated protein PTH_0052 from Pelotomaculum thermopropionicum (strain DSM 13744 / JCM 10971 / SI).